The chain runs to 325 residues: Release factor glutamine methyltransferase (325 aa).

Residues 141 to 145 (GTGSG), aspartate 164, tryptophan 193, and asparagine 207 each bind S-adenosyl-L-methionine. Position 207 to 210 (207 to 210 (NPPY)) interacts with substrate. A disordered region spans residues 306–325 (LPPIHIDAKPSAPGNGPTKA).

The protein belongs to the protein N5-glutamine methyltransferase family. PrmC subfamily.

It carries out the reaction L-glutaminyl-[peptide chain release factor] + S-adenosyl-L-methionine = N(5)-methyl-L-glutaminyl-[peptide chain release factor] + S-adenosyl-L-homocysteine + H(+). Its function is as follows. Methylates the class 1 translation termination release factors RF1/PrfA and RF2/PrfB on the glutamine residue of the universally conserved GGQ motif. This is Release factor glutamine methyltransferase from Rhodospirillum rubrum (strain ATCC 11170 / ATH 1.1.1 / DSM 467 / LMG 4362 / NCIMB 8255 / S1).